A 463-amino-acid polypeptide reads, in one-letter code: Phosphomannomutase/phosphoglucomutase (463 aa).

Serine 108 functions as the Phosphoserine intermediate in the catalytic mechanism. Residues serine 108, aspartate 242, aspartate 244, and aspartate 246 each contribute to the Mg(2+) site. Substrate is bound by residues glutamate 325, serine 327, and histidine 329.

It belongs to the phosphohexose mutase family. Monomer. Requires Mg(2+) as cofactor.

The catalysed reaction is alpha-D-mannose 1-phosphate = D-mannose 6-phosphate. It catalyses the reaction alpha-D-glucose 1-phosphate = alpha-D-glucose 6-phosphate. It participates in nucleotide-sugar biosynthesis; GDP-alpha-D-mannose biosynthesis; alpha-D-mannose 1-phosphate from D-fructose 6-phosphate: step 2/2. It functions in the pathway bacterial outer membrane biogenesis; lipopolysaccharide biosynthesis. Its function is as follows. The phosphomannomutase activity produces a precursor for alginate polymerization. The alginate layer causes a mucoid phenotype and provides a protective barrier against host immune defenses and antibiotics. Also involved in core-LPS biosynthesis due to its phosphoglucomutase activity. Essential for biofilm production. The chain is Phosphomannomutase/phosphoglucomutase (algC) from Pseudomonas putida (strain ATCC 47054 / DSM 6125 / CFBP 8728 / NCIMB 11950 / KT2440).